Reading from the N-terminus, the 188-residue chain is NAD(P)H-quinone oxidoreductase subunit 6, chloroplastic (188 aa).

5 consecutive transmembrane segments (helical) span residues Gly-10–Asn-30, Ile-32–Val-52, Ala-61–Ile-81, Gly-97–Leu-117, and Phe-153–Thr-173.

This sequence belongs to the complex I subunit 6 family. NDH is composed of at least 16 different subunits, 5 of which are encoded in the nucleus.

It is found in the plastid. The protein resides in the chloroplast thylakoid membrane. It catalyses the reaction a plastoquinone + NADH + (n+1) H(+)(in) = a plastoquinol + NAD(+) + n H(+)(out). The enzyme catalyses a plastoquinone + NADPH + (n+1) H(+)(in) = a plastoquinol + NADP(+) + n H(+)(out). Functionally, NDH shuttles electrons from NAD(P)H:plastoquinone, via FMN and iron-sulfur (Fe-S) centers, to quinones in the photosynthetic chain and possibly in a chloroplast respiratory chain. The immediate electron acceptor for the enzyme in this species is believed to be plastoquinone. Couples the redox reaction to proton translocation, and thus conserves the redox energy in a proton gradient. The protein is NAD(P)H-quinone oxidoreductase subunit 6, chloroplastic (ndhG) of Psilotum nudum (Whisk fern).